Consider the following 201-residue polypeptide: Recombination protein RecR (201 aa).

A C4-type zinc finger spans residues 57-72 (CSDCRTFTEQDVCAIC). Residues 81–176 (GLVCVVESPA…MASRIAHGVP (96 aa)) enclose the Toprim domain.

It belongs to the RecR family.

In terms of biological role, may play a role in DNA repair. It seems to be involved in an RecBC-independent recombinational process of DNA repair. It may act with RecF and RecO. The chain is Recombination protein RecR from Pectobacterium atrosepticum (strain SCRI 1043 / ATCC BAA-672) (Erwinia carotovora subsp. atroseptica).